Here is a 589-residue protein sequence, read N- to C-terminus: TAF5-like RNA polymerase II p300/CBP-associated factor-associated factor 65 kDa subunit 5L (589 aa).

Residues 211–221 (ASGSSSRSENN) are compositionally biased toward polar residues. Residues 211 to 230 (ASGSSSRSENNGLEPPDMPS) form a disordered region. WD repeat units follow at residues 266-305 (NTEQLLNTAEISPDSKLLAAGFDNSCIKLWSLRSKKLKSE), 340-379 (GHCGPVYSTRFLADSSGLLSCSEDMSIRYWDLGSFTNTVL), 382-421 (GHAYPVWDLDISPYSLYFASGSHDRTARLWSFDRTYPLRI), 424-463 (GHLADVDCVKFHPNSNYLATGSTDKTVRLWSAQQGNSVRL), 466-505 (GHRGPVLSLAFSPNGKYLASAGEDQRLKLWDLASGTLYKE), and 508-547 (GHTDNITSLTFSPDSGLIASASMDNSVRVWDIRNTYCSAP).

Belongs to the WD repeat TAF5 family. As to quaternary structure, the PCAF complex is composed of a number of TBP-associated factors (TAFS), such as TAF5, TAF5L, TAF6, TAF6L, TAF9, TAF10 and TAF12, PCAF, and also PCAF-associated factors (PAFs), such as TADA2L/ADA2, TADA3L/ADA3 and SPT3. Component of the STAGA transcription coactivator-HAT complex, at least composed of SUPT3H, GCN5L2, TAF5L, TAF6L, SUPT7L, TADA3L, TAD1L, TAF10, TAF12, TRRAP and TAF9.

The protein localises to the nucleus. Functionally, functions as a component of the PCAF complex. The PCAF complex is capable of efficiently acetylating histones in a nucleosomal context. The PCAF complex could be considered as the human version of the yeast SAGA complex. With TAF6L, acts as an epigenetic regulator essential for somatic reprogramming. Regulates target genes through H3K9ac deposition and MYC recruitment which trigger MYC regulatory network to orchestrate gene expression programs to control embryonic stem cell state. This chain is TAF5-like RNA polymerase II p300/CBP-associated factor-associated factor 65 kDa subunit 5L, found in Homo sapiens (Human).